The primary structure comprises 340 residues: Peroxisomal coenzyme A diphosphatase 1, peroxisomal (340 aa).

Residues 1–7 (MILSQRR) constitute a peroxisome transit peptide. Residues 37–199 (KRNSAVIILL…DEDVKSYQAE (163 aa)) form the Nudix hydrolase domain. A Nudix box motif is present at residues 77 to 99 (GKADYFQETFESVARREAEEEIG). Residues Glu93 and Glu97 each coordinate Mg(2+).

Belongs to the Nudix hydrolase family. PCD1 subfamily. The cofactor is Mn(2+). It depends on Mg(2+) as a cofactor. The size of the cleaved transit peptide can be of 7 or 8 residues.

It localises to the peroxisome. It catalyses the reaction CoA + H2O = (R)-4'-phosphopantetheine + adenosine 3',5'-bisphosphate + 2 H(+). The enzyme catalyses CoA-disulfide + H2O = 4'-phosphopantetheinyl-CoA disulfide + adenosine 3',5'-bisphosphate + 2 H(+). It carries out the reaction 8-oxo-dGTP + H2O = 8-oxo-dGMP + diphosphate + H(+). The catalysed reaction is 2-oxo-dATP + H2O = 2-oxo-dAMP + diphosphate + H(+). Its function is as follows. Diphosphatase (pyrophosphatase) with specificity for coenzyme A and CoA derivatives. Catalyzes the hydrolysis of the diphosphate linkage in CoA to give 3',5'-ADP and 4'-phosphopantetheine. Prefers oxidized CoA disulfide (CoASSCoA) over CoA as a substrate. May be required to remove potentially toxic oxidized CoA disulfide from peroxisomes to maintain the capacity for beta-oxidation of fatty acids. Can also hydrolyze 8-oxo-dGTP and 2-OH-dATP in vitro; therefore it may function as a sanitizing enzyme for oxidized nucleotides and may contribute to prevention of spontaneous mutagenesis due to the misincorporation of these oxidized nucleotides during DNA synthesis. Shows moderate activity in vitro with several short chain acyl-CoA esters and very low activity on 3'-dephospho-CoA while is not active with (deoxy)nucleoside 5'-triphosphates, nucleoside 5'-di- or monophosphates, diadenosine polyphosphates, nucleoside 5'-diphosphosugars, cytidine 5'-diphosphoalcohols, NAD(+), NADH, or FAD. This Saccharomyces cerevisiae (strain ATCC 204508 / S288c) (Baker's yeast) protein is Peroxisomal coenzyme A diphosphatase 1, peroxisomal (PCD1).